A 115-amino-acid chain; its full sequence is Large ribosomal subunit protein uL22 (115 aa).

It belongs to the universal ribosomal protein uL22 family. Part of the 50S ribosomal subunit.

Its function is as follows. This protein binds specifically to 23S rRNA; its binding is stimulated by other ribosomal proteins, e.g. L4, L17, and L20. It is important during the early stages of 50S assembly. It makes multiple contacts with different domains of the 23S rRNA in the assembled 50S subunit and ribosome. The globular domain of the protein is located near the polypeptide exit tunnel on the outside of the subunit, while an extended beta-hairpin is found that lines the wall of the exit tunnel in the center of the 70S ribosome. The chain is Large ribosomal subunit protein uL22 from Streptomyces avermitilis (strain ATCC 31267 / DSM 46492 / JCM 5070 / NBRC 14893 / NCIMB 12804 / NRRL 8165 / MA-4680).